An 819-amino-acid polypeptide reads, in one-letter code: Lon protease (819 aa).

Residues 1–14 (MNSTNNTDSQNLDP) show a composition bias toward polar residues. The disordered stretch occupies residues 1-41 (MNSTNNTDSQNLDPNASEVEKLLDESAEAEEKTDDHTPPSE). Over residues 18 to 38 (EVEKLLDESAEAEEKTDDHTP) the composition is skewed to basic and acidic residues. The Lon N-terminal domain occupies 42–239 (LFILPLNKRP…KALVLLKKEL (198 aa)). ATP is bound at residue 392 to 399 (GPPGVGKT). The 185-residue stretch at 634–818 (KTPVGVATGL…DDVFKIAFPG (185 aa)) folds into the Lon proteolytic domain. Catalysis depends on residues Ser724 and Lys767.

This sequence belongs to the peptidase S16 family. Homohexamer. Organized in a ring with a central cavity.

Its subcellular location is the cytoplasm. The catalysed reaction is Hydrolysis of proteins in presence of ATP.. ATP-dependent serine protease that mediates the selective degradation of mutant and abnormal proteins as well as certain short-lived regulatory proteins. Required for cellular homeostasis and for survival from DNA damage and developmental changes induced by stress. Degrades polypeptides processively to yield small peptide fragments that are 5 to 10 amino acids long. Binds to DNA in a double-stranded, site-specific manner. The polypeptide is Lon protease (Chlamydia muridarum (strain MoPn / Nigg)).